The sequence spans 207 residues: Cytochrome c oxidase subunit 3 (207 aa).

5 consecutive transmembrane segments (helical) span residues Phe-30–Ala-50, Val-67–Ala-87, Leu-101–Phe-121, Leu-144–Ile-164, and Trp-186–Val-206.

It belongs to the cytochrome c oxidase subunit 3 family.

The protein resides in the cell membrane. It catalyses the reaction 4 Fe(II)-[cytochrome c] + O2 + 8 H(+)(in) = 4 Fe(III)-[cytochrome c] + 2 H2O + 4 H(+)(out). The chain is Cytochrome c oxidase subunit 3 (ctaE) from Bacillus subtilis (strain 168).